Reading from the N-terminus, the 709-residue chain is Phosphoribosylformylglycinamidine synthase subunit PurL (709 aa).

His36 is a catalytic residue. Tyr39 and Lys80 together coordinate ATP. Glu82 contacts Mg(2+). Residues 83-86 and Arg105 each bind substrate; that span reads SHNH. The active-site Proton acceptor is the His84. Asp106 provides a ligand contact to Mg(2+). Gln226 provides a ligand contact to substrate. Residue Asp252 participates in Mg(2+) binding. A substrate-binding site is contributed by 294–296; it reads ETQ. Asp470 and Gly507 together coordinate ATP. Residue Ser510 participates in substrate binding.

It belongs to the FGAMS family. As to quaternary structure, monomer. Part of the FGAM synthase complex composed of 1 PurL, 1 PurQ and 2 PurS subunits.

It localises to the cytoplasm. It carries out the reaction N(2)-formyl-N(1)-(5-phospho-beta-D-ribosyl)glycinamide + L-glutamine + ATP + H2O = 2-formamido-N(1)-(5-O-phospho-beta-D-ribosyl)acetamidine + L-glutamate + ADP + phosphate + H(+). It participates in purine metabolism; IMP biosynthesis via de novo pathway; 5-amino-1-(5-phospho-D-ribosyl)imidazole from N(2)-formyl-N(1)-(5-phospho-D-ribosyl)glycinamide: step 1/2. In terms of biological role, part of the phosphoribosylformylglycinamidine synthase complex involved in the purines biosynthetic pathway. Catalyzes the ATP-dependent conversion of formylglycinamide ribonucleotide (FGAR) and glutamine to yield formylglycinamidine ribonucleotide (FGAM) and glutamate. The FGAM synthase complex is composed of three subunits. PurQ produces an ammonia molecule by converting glutamine to glutamate. PurL transfers the ammonia molecule to FGAR to form FGAM in an ATP-dependent manner. PurS interacts with PurQ and PurL and is thought to assist in the transfer of the ammonia molecule from PurQ to PurL. The chain is Phosphoribosylformylglycinamidine synthase subunit PurL from Saccharolobus islandicus (strain M.14.25 / Kamchatka #1) (Sulfolobus islandicus).